We begin with the raw amino-acid sequence, 110 residues long: Holo-[acyl-carrier-protein] synthase (110 aa).

Mg(2+)-binding residues include D8 and E54.

This sequence belongs to the P-Pant transferase superfamily. AcpS family. The cofactor is Mg(2+).

It is found in the cytoplasm. The catalysed reaction is apo-[ACP] + CoA = holo-[ACP] + adenosine 3',5'-bisphosphate + H(+). Transfers the 4'-phosphopantetheine moiety from coenzyme A to a Ser of acyl-carrier-protein. The sequence is that of Holo-[acyl-carrier-protein] synthase from Mycoplasma mycoides subsp. mycoides SC (strain CCUG 32753 / NCTC 10114 / PG1).